A 332-amino-acid chain; its full sequence is 2,3-diketo-L-gulonate reductase (332 aa).

H44 acts as the Proton donor in catalysis. NAD(+)-binding positions include 168 to 174 (ITMVDMS), 224 to 225 (WK), and 304 to 306 (GHE).

It belongs to the LDH2/MDH2 oxidoreductase family. DlgD subfamily. As to quaternary structure, homodimer.

The protein localises to the cytoplasm. It carries out the reaction 3-dehydro-L-gulonate + NAD(+) = 2,3-dioxo-L-gulonate + NADH + H(+). The enzyme catalyses 3-dehydro-L-gulonate + NADP(+) = 2,3-dioxo-L-gulonate + NADPH + H(+). In terms of biological role, catalyzes the reduction of 2,3-diketo-L-gulonate in the presence of NADH, to form 3-keto-L-gulonate. In Klebsiella oxytoca, this protein is 2,3-diketo-L-gulonate reductase.